The primary structure comprises 1482 residues: Calcium-dependent protein kinase 6 (1482 aa).

Disordered regions lie at residues 250–320 and 739–760; these read TNNY…IRPN and SENF…DDSN. Polar residues predominate over residues 254–264; sequence AHDNNQDSNSY. The segment covering 277–301 has biased composition (acidic residues); the sequence is EEDNDTGDTYADNEEDEDNRDDNDD. A compositionally biased stretch (polar residues) spans 302 to 318; sequence YSQYNQCEVESDTNQIR. Residues 739–748 show a composition bias toward low complexity; the sequence is SENFSNNFND. The span at 749 to 760 shows a compositional bias: basic and acidic residues; the sequence is NKQKSLKNDDSN. 2 EF-hand domains span residues 931-966 and 972-1007; these read IFER…LCYN and VDKK…LLKQ. Ca(2+) contacts are provided by D985, S987, N989, C991, and D996. The Protein kinase domain maps to 1043–1295; it reads LSFKKILGCG…AAVLLHHPWF (253 aa). ATP contacts are provided by residues 1049 to 1057 and K1072; that span reads LGCGAFGEV. D1162 functions as the Proton acceptor in the catalytic mechanism. EF-hand domains are found at residues 1338–1373, 1376–1406, 1407–1442, and 1468–1482; these read NHVK…AGVK, DINR…RWKN, IDST…NGVN, and KISF…LSTF. D1351, N1353, N1355, S1357, and E1362 together coordinate Ca(2+). The Ca(2+) site is built by D1420, D1422, D1424, Y1426, and D1431.

This sequence belongs to the protein kinase superfamily. Ser/Thr protein kinase family. CDPK subfamily. Mg(2+) is required as a cofactor.

It catalyses the reaction L-seryl-[protein] + ATP = O-phospho-L-seryl-[protein] + ADP + H(+). The catalysed reaction is L-threonyl-[protein] + ATP = O-phospho-L-threonyl-[protein] + ADP + H(+). Activated by calcium. Functionally, calcium-dependent protein kinase which acts as a sensor and effector of intracellular Ca(2+) levels. In sporozoites, probably involved in the secretion of the cysteine protease that cleaves circumsporozoite protein CSP, thereby exposing CSP TSR domain, which binds with high affinity to highly sulfated heparan sulfate proteoglycans (HSPGs), resulting in productive invasion of the host hepatocytes. This is Calcium-dependent protein kinase 6 from Plasmodium berghei (strain Anka).